Consider the following 912-residue polypeptide: Phosphoenolpyruvate carboxylase (912 aa).

Active-site residues include H138 and K575.

It belongs to the PEPCase type 1 family. Requires Mg(2+) as cofactor.

It carries out the reaction oxaloacetate + phosphate = phosphoenolpyruvate + hydrogencarbonate. In terms of biological role, forms oxaloacetate, a four-carbon dicarboxylic acid source for the tricarboxylic acid cycle. This chain is Phosphoenolpyruvate carboxylase, found in Lactobacillus helveticus (strain DPC 4571).